The sequence spans 865 residues: MERGSPGAGAARLPRDQDSVEAWLDDHRDFTFSYFVKKATREMVNAWFAERVHTIPVCKEGIRGHAESCSCSSQQSSRADSSAPGTPTRKISASEFDRPLRPIVVKDSEGTVSFLADSEKKEQMPLTPPRFDNDEGDQCSRLLELVKDISSHLDVTALCHKIFLHIHGLISADRYSLFLVCEDSSNDKFLISRLFDVAEGSTLEEASNNCIRLEWNKGIVGHVAALGEPLNIKDAYEDPRFNAEVDQITGYKTQSILCMPIKNHREEVVGVAQAINKKSGNGGTFTEKDEKDFAAYLAFCGIVLHNAQLYETSLLENKRNQVLLDLASLIFEEQQSLEVILKKIAATIISFMQVQKCTIFIVDEDCSDSFSSVFHMECEELEKLPDTLTRERDANRINYMYAQYVKNTMEPLNIPDVSKDKRFPWTNENTGNVNQQCIRSLLCTPIKNGKKNKVIGVCQLVNKMEENTGKVKPFNRNDEQFLEAFVIFCGLGIQNTQMYEAVERAMAKQMVTLEVLSYHASAAEEETKELQSLAAAVVPSAQTLKITDFSFSDFELSDLETALCTIRMFTDLNLVQNFQMKHEVLCRWILSVKKNYRKNVAYHNWRHAFNTAQCMFAALKAGKIQNKLTDLEILALLIAALSHDLDHRGVNNSYIQRSEHPLAQLYCHSIMEHHHFDQCLMILNSPGNQILSGLSIEEYKTTLKIIKQAILATDLALYIKRRGEFFELIRKNQFNLEDPHQKELFLAMLMTACDLSAITKPWPIQQRIAELVATEFFDQGDRERKELNIEPADLMNREKKNKIPSMQVGFIDAICLQLYEALTHVSEDCFPLLDGCRKNRQKWQALAEQQEKTLINGESSQAKRN.

A compositionally biased stretch (low complexity) spans C69–A83. Positions C69–S92 are disordered. S92 bears the Phosphoserine mark. GAF domains are found at residues D154–L304 and S336–I493. A PDEase domain is found at E526–Q850. H603 serves as the catalytic Proton donor. Positions 607, 643, 644, and 754 each coordinate Zn(2+). D644 is a Mg(2+) binding site. Q807 serves as a coordination point for 3',5'-cyclic GMP.

It belongs to the cyclic nucleotide phosphodiesterase family. The cofactor is Zn(2+). Mg(2+) is required as a cofactor. In terms of processing, phosphorylation is regulated by binding of cGMP to the two allosteric sites. Phosphorylation by PRKG1 leads to its activation. Isoform PDE5A1 and isoform PDE5A2 are highly expressed in the cerebellum, hippocampus, retina, lung, heart, spleen, and thoracic artery. Isoform PDE5A1, but not isoform PDE5A2, is also abundantly expressed in the pylorus.

The protein resides in the cytoplasm. It is found in the cytosol. The enzyme catalyses 3',5'-cyclic GMP + H2O = GMP + H(+). Its pathway is purine metabolism; 3',5'-cyclic GMP degradation; GMP from 3',5'-cyclic GMP: step 1/1. Its activity is regulated as follows. Inhibited by zaprinast. Functionally, plays a role in signal transduction by regulating the intracellular concentration of cyclic nucleotides. This phosphodiesterase catalyzes the specific hydrolysis of cGMP to 5'-GMP. Specifically regulates nitric-oxide-generated cGMP. The chain is cGMP-specific 3',5'-cyclic phosphodiesterase (PDE5A) from Canis lupus familiaris (Dog).